The following is a 206-amino-acid chain: ATP phosphoribosyltransferase (206 aa).

This sequence belongs to the ATP phosphoribosyltransferase family. Short subfamily. In terms of assembly, heteromultimer composed of HisG and HisZ subunits.

It localises to the cytoplasm. The enzyme catalyses 1-(5-phospho-beta-D-ribosyl)-ATP + diphosphate = 5-phospho-alpha-D-ribose 1-diphosphate + ATP. It functions in the pathway amino-acid biosynthesis; L-histidine biosynthesis; L-histidine from 5-phospho-alpha-D-ribose 1-diphosphate: step 1/9. Functionally, catalyzes the condensation of ATP and 5-phosphoribose 1-diphosphate to form N'-(5'-phosphoribosyl)-ATP (PR-ATP). Has a crucial role in the pathway because the rate of histidine biosynthesis seems to be controlled primarily by regulation of HisG enzymatic activity. This Leptospira interrogans serogroup Icterohaemorrhagiae serovar copenhageni (strain Fiocruz L1-130) protein is ATP phosphoribosyltransferase.